Here is a 343-residue protein sequence, read N- to C-terminus: Nuclear hormone receptor family member nhr-167 (343 aa).

A DNA-binding region (nuclear receptor) is located at residues 5-81 (HQKCAVCGRF…VGMTLPSYLL (77 aa)). NR C4-type zinc fingers lie at residues 8–28 (CAVCGRFTTEFNYSVLSCNSC) and 45–64 (CFRGERCFEKTPYIFKCTSC). One can recognise an NR LBD domain in the interval 101–339 (THNKRMDSLF…KKLVKDGIEA (239 aa)).

Belongs to the nuclear hormone receptor family.

It localises to the nucleus. Orphan nuclear receptor. This chain is Nuclear hormone receptor family member nhr-167 (nhr-167), found in Caenorhabditis elegans.